The primary structure comprises 471 residues: 8-amino-7-oxononanoate synthase (471 aa).

A substrate-binding site is contributed by Arg-40. Pyridoxal 5'-phosphate is bound at residue 131-132 (GY). His-156 is a substrate binding site. Positions 202, 230, and 258 each coordinate pyridoxal 5'-phosphate. Residue Lys-261 is modified to N6-(pyridoxal phosphate)lysine. Substrate is bound at residue Thr-377. The disordered stretch occupies residues 409–471 (SEGQTRREAE…LGAARRETAA (63 aa)).

The protein belongs to the class-II pyridoxal-phosphate-dependent aminotransferase family. BioF subfamily. As to quaternary structure, homodimer. Pyridoxal 5'-phosphate serves as cofactor.

The enzyme catalyses 6-carboxyhexanoyl-[ACP] + L-alanine + H(+) = (8S)-8-amino-7-oxononanoate + holo-[ACP] + CO2. The protein operates within cofactor biosynthesis; biotin biosynthesis. Catalyzes the decarboxylative condensation of pimeloyl-[acyl-carrier protein] and L-alanine to produce 8-amino-7-oxononanoate (AON), [acyl-carrier protein], and carbon dioxide. The chain is 8-amino-7-oxononanoate synthase from Burkholderia ambifaria (strain ATCC BAA-244 / DSM 16087 / CCUG 44356 / LMG 19182 / AMMD) (Burkholderia cepacia (strain AMMD)).